A 443-amino-acid chain; its full sequence is Xaa-Pro dipeptidase (443 aa).

Mn(2+) contacts are provided by aspartate 246, aspartate 257, histidine 339, glutamate 384, and glutamate 423.

Belongs to the peptidase M24B family. Bacterial-type prolidase subfamily. Mn(2+) serves as cofactor.

It carries out the reaction Xaa-L-Pro dipeptide + H2O = an L-alpha-amino acid + L-proline. Splits dipeptides with a prolyl residue in the C-terminal position. This Shigella flexneri protein is Xaa-Pro dipeptidase.